The following is a 258-amino-acid chain: Ubiquinone/menaquinone biosynthesis C-methyltransferase UbiE (258 aa).

S-adenosyl-L-methionine contacts are provided by residues Thr81, Asp102, and 130 to 131; that span reads NA.

Belongs to the class I-like SAM-binding methyltransferase superfamily. MenG/UbiE family.

It carries out the reaction a 2-demethylmenaquinol + S-adenosyl-L-methionine = a menaquinol + S-adenosyl-L-homocysteine + H(+). The catalysed reaction is a 2-methoxy-6-(all-trans-polyprenyl)benzene-1,4-diol + S-adenosyl-L-methionine = a 5-methoxy-2-methyl-3-(all-trans-polyprenyl)benzene-1,4-diol + S-adenosyl-L-homocysteine + H(+). Its pathway is quinol/quinone metabolism; menaquinone biosynthesis; menaquinol from 1,4-dihydroxy-2-naphthoate: step 2/2. The protein operates within cofactor biosynthesis; ubiquinone biosynthesis. Functionally, methyltransferase required for the conversion of demethylmenaquinol (DMKH2) to menaquinol (MKH2) and the conversion of 2-polyprenyl-6-methoxy-1,4-benzoquinol (DDMQH2) to 2-polyprenyl-3-methyl-6-methoxy-1,4-benzoquinol (DMQH2). The protein is Ubiquinone/menaquinone biosynthesis C-methyltransferase UbiE of Rhizobium rhizogenes (strain K84 / ATCC BAA-868) (Agrobacterium radiobacter).